A 256-amino-acid polypeptide reads, in one-letter code: 3-hydroxy-5-phosphonooxypentane-2,4-dione thiolase (256 aa).

The active-site Schiff-base intermediate with substrate is Lys168.

Belongs to the DeoC/FbaB aldolase family. Homodecamer.

It localises to the cytoplasm. The catalysed reaction is dihydroxyacetone phosphate + acetyl-CoA = 3-hydroxy-2,4-dioxopentyl phosphate + CoA. Its function is as follows. Involved in the degradation of phospho-AI-2, thereby terminating induction of the lsr operon and closing the AI-2 signaling cycle. Catalyzes the transfer of an acetyl moiety from 3-hydroxy-5-phosphonooxypentane-2,4-dione to CoA to form glycerone phosphate and acetyl-CoA. This is 3-hydroxy-5-phosphonooxypentane-2,4-dione thiolase (lsrF) from Shigella flexneri.